A 510-amino-acid chain; its full sequence is MLISLSSSTLLTLFFIALSASWLSGLLFLHARMPLRFVHIHIGIAALPSLVSLLALVNNNGDRVVGPWHLDTLAWLMAFFVLTIGLIIQRFSVRYLMGDRSYRKYFALFTFTTGVSSVAWLSDDLRFMIMCWGATLIGLVLLIGLNKGWKVVSEATKISGYLFTISWIALLSAIIWLFQITGQWQLTSVVTNENVAQFGTLEKTGINLLIIVAVMIPAAQWPFQRWLIESAVAPTPVSAIMHAGLVNAGGIMLTRFSPLFHDDIAQIILLIFSSISVLIGTGISLVQVDYKRQLVGSTIAQMGFMLIQCALGAYLAAVIHLILHGLFKATLFLQAGSSVQRVEVVKQSNKKMSNLWMIVGRVLGLFIAIAFWFITSGEGYQLVSALILGWSLYFSWKQLVVFGEGRMGRIAGLIVLIGFSLIYFTVHNSLYKWLHTDMYQSVQPSAPAVIFVICILLFSSVICTFVTRNQSSTLSAVLYLWSVRVGEARRKSVESHPSYLKHDVSKGGNS.

The next 14 membrane-spanning stretches (helical) occupy residues 9–29, 37–57, 68–88, 105–122, 125–145, 158–178, 204–224, 226–246, 266–286, 303–323, 355–375, 382–402, 410–430, and 446–466; these read TLLTLFFIALSASWLSGLLFL, FVHIHIGIAALPSLVSLLALV, WHLDTLAWLMAFFVLTIGLII, YFALFTFTTGVSSVAWLS, LRFMIMCWGATLIGLVLLIGL, ISGYLFTISWIALLSAIIWLF, TGINLLIIVAVMIPAAQWPFQ, WLIESAVAPTPVSAIMHAGLV, QIILLIFSSISVLIGTGISLV, GFMLIQCALGAYLAAVIHLIL, LWMIVGRVLGLFIAIAFWFIT, LVSALILGWSLYFSWKQLVVF, IAGLIVLIGFSLIYFTVHNSL, and APAVIFVICILLFSSVICTFV.

This sequence belongs to the inorganic carbon transporter (TC 9.A.2) DabB family. As to quaternary structure, forms a complex with DabA.

The protein resides in the cell membrane. Part of an energy-coupled inorganic carbon pump. Expression of both dabA and dabB (DA2) restores growth in ambient air to E.coli deleted of its carbonic anhydrase genes (called CAfree, deletion of 'can' and 'cynT'). This Bacillus anthracis protein is Probable inorganic carbon transporter subunit DabB.